The chain runs to 224 residues: Lipoprotein-releasing system ATP-binding protein LolD (224 aa).

The 220-residue stretch at L5–V224 folds into the ABC transporter domain. G37–S44 contributes to the ATP binding site.

Belongs to the ABC transporter superfamily. Lipoprotein translocase (TC 3.A.1.125) family. As to quaternary structure, the complex is composed of two ATP-binding proteins (LolD) and two transmembrane proteins (LolC and LolE).

The protein resides in the cell inner membrane. Part of the ABC transporter complex LolCDE involved in the translocation of mature outer membrane-directed lipoproteins, from the inner membrane to the periplasmic chaperone, LolA. Responsible for the formation of the LolA-lipoprotein complex in an ATP-dependent manner. The chain is Lipoprotein-releasing system ATP-binding protein LolD from Aquifex aeolicus (strain VF5).